The following is a 120-amino-acid chain: Large ribosomal subunit protein bL19c (120 aa).

The protein belongs to the bacterial ribosomal protein bL19 family.

It is found in the plastid. Its subcellular location is the chloroplast. The sequence is that of Large ribosomal subunit protein bL19c from Thalassiosira weissflogii (Marine diatom).